A 437-amino-acid chain; its full sequence is Repulsive guidance molecule B (437 aa).

The signal sequence occupies residues 1–45 (MGLRAAPSSAAAAAAEVEQRRSPGLCPPPLELLLLLLFSLGLLHA). A glycan (N-linked (GlcNAc...) asparagine) is linked at Asn120. Residues 121-133 (CSKDGPTSSTNPE) are compositionally biased toward polar residues. The disordered stretch occupies residues 121 to 153 (CSKDGPTSSTNPEVTHDPCNYHSHAGAREHRRG). Cystine bridges form between Cys139–Cys226 and Cys163–Cys312. N-linked (GlcNAc...) asparagine glycosylation occurs at Asn383. Residue Asn413 is the site of GPI-anchor amidated asparagine attachment. Residues 414-437 (GTPRGGSDLSVSLGLTCLILIVFL) constitute a propeptide, removed in mature form.

The protein belongs to the repulsive guidance molecule (RGM) family. As to quaternary structure, homooligomer. Interacts with DRGX. Interacts with BMP2 and BMP4. Interacts with the BMP type I receptors ACVR1, BMPR1A and BMPR1B and with the BMP type II receptor ACVR2B. The functional complex with its receptor NEO1/neogenin appears to be a heterotetramer with a 2:2 stoichiometry, RGM molecules acting as staples that bring two NEO1 receptors together without interacting themselves, this arrangement leads to activation of downstream signaling via RhoA. In terms of processing, GPI-anchored. Post-translationally, autocatalytically cleaved at low pH; the two chains remain linked via two disulfide bonds.

Its subcellular location is the cell membrane. It is found in the membrane raft. Functionally, member of the repulsive guidance molecule (RGM) family that contributes to the patterning of the developing nervous system. Acts as a bone morphogenetic protein (BMP) coreceptor that potentiates BMP signaling. Promotes neuronal adhesion. May inhibit neurite outgrowth. The protein is Repulsive guidance molecule B of Homo sapiens (Human).